The primary structure comprises 487 residues: 3-octaprenyl-4-hydroxybenzoate carboxy-lyase (487 aa).

Asn-172 contacts Mn(2+). Prenylated FMN is bound by residues 175-177 (IYR), 189-191 (RWL), and 194-195 (RG). Glu-238 is a binding site for Mn(2+). Residue Asp-287 is the Proton donor of the active site.

This sequence belongs to the UbiD family. Homohexamer. Requires prenylated FMN as cofactor. Mn(2+) serves as cofactor.

It is found in the cell membrane. The catalysed reaction is a 4-hydroxy-3-(all-trans-polyprenyl)benzoate + H(+) = a 2-(all-trans-polyprenyl)phenol + CO2. It functions in the pathway cofactor biosynthesis; ubiquinone biosynthesis. In terms of biological role, catalyzes the decarboxylation of 3-octaprenyl-4-hydroxy benzoate to 2-octaprenylphenol, an intermediate step in ubiquinone biosynthesis. This chain is 3-octaprenyl-4-hydroxybenzoate carboxy-lyase, found in Thiobacillus denitrificans (strain ATCC 25259 / T1).